Reading from the N-terminus, the 316-residue chain is Ribosomal RNA small subunit methyltransferase H (316 aa).

Residues 35–37 (SGH), D55, F84, D105, and Q112 contribute to the S-adenosyl-L-methionine site.

It belongs to the methyltransferase superfamily. RsmH family.

The protein resides in the cytoplasm. It catalyses the reaction cytidine(1402) in 16S rRNA + S-adenosyl-L-methionine = N(4)-methylcytidine(1402) in 16S rRNA + S-adenosyl-L-homocysteine + H(+). Its function is as follows. Specifically methylates the N4 position of cytidine in position 1402 (C1402) of 16S rRNA. This Streptococcus pyogenes serotype M6 (strain ATCC BAA-946 / MGAS10394) protein is Ribosomal RNA small subunit methyltransferase H.